The chain runs to 286 residues: Acetylglutamate kinase (286 aa).

Residues 63 to 64, Arg-85, and Asn-178 each bind substrate; that span reads GG.

Belongs to the acetylglutamate kinase family. ArgB subfamily.

The protein localises to the cytoplasm. It catalyses the reaction N-acetyl-L-glutamate + ATP = N-acetyl-L-glutamyl 5-phosphate + ADP. The protein operates within amino-acid biosynthesis; L-arginine biosynthesis; N(2)-acetyl-L-ornithine from L-glutamate: step 2/4. Catalyzes the ATP-dependent phosphorylation of N-acetyl-L-glutamate. This Clostridioides difficile (strain 630) (Peptoclostridium difficile) protein is Acetylglutamate kinase.